Consider the following 959-residue polypeptide: Isoleucine--tRNA ligase (959 aa).

A 'HIGH' region motif is present at residues 66 to 76 (PYANGDIHIGH). Residue Glu592 coordinates L-isoleucyl-5'-AMP. A 'KMSKS' region motif is present at residues 633–637 (KMSKS). Position 636 (Lys636) interacts with ATP. Cys922, Cys925, Cys942, and Cys945 together coordinate Zn(2+).

This sequence belongs to the class-I aminoacyl-tRNA synthetase family. IleS type 1 subfamily. As to quaternary structure, monomer. It depends on Zn(2+) as a cofactor.

It is found in the cytoplasm. The catalysed reaction is tRNA(Ile) + L-isoleucine + ATP = L-isoleucyl-tRNA(Ile) + AMP + diphosphate. Its function is as follows. Catalyzes the attachment of isoleucine to tRNA(Ile). As IleRS can inadvertently accommodate and process structurally similar amino acids such as valine, to avoid such errors it has two additional distinct tRNA(Ile)-dependent editing activities. One activity is designated as 'pretransfer' editing and involves the hydrolysis of activated Val-AMP. The other activity is designated 'posttransfer' editing and involves deacylation of mischarged Val-tRNA(Ile). This is Isoleucine--tRNA ligase from Cupriavidus metallidurans (strain ATCC 43123 / DSM 2839 / NBRC 102507 / CH34) (Ralstonia metallidurans).